Reading from the N-terminus, the 261-residue chain is Kallikrein 1-related peptidase b8 (261 aa).

Positions 1-18 are cleaved as a signal peptide; sequence MRFLILFLALSLGGIDAA. Residues 19 to 24 constitute a propeptide, activation peptide; it reads PPLQSR. A Peptidase S1 domain is found at 25–258; sequence VVGGFNCEKN…FNSWIKDTMT (234 aa). 5 disulfide bridges follow: C31–C173, C50–C66, C152–C219, C184–C198, and C209–C234. The Charge relay system role is filled by H65. Residue N102 is glycosylated (N-linked (GlcNAc...) asparagine). D120 functions as the Charge relay system in the catalytic mechanism. The active-site Charge relay system is S213.

This sequence belongs to the peptidase S1 family. Kallikrein subfamily.

It catalyses the reaction Preferential cleavage of Arg-|-Xaa bonds in small molecule substrates. Highly selective action to release kallidin (lysyl-bradykinin) from kininogen involves hydrolysis of Met-|-Xaa or Leu-|-Xaa.. Its function is as follows. Glandular kallikreins cleave Met-Lys and Arg-Ser bonds in kininogen to release Lys-bradykinin. This chain is Kallikrein 1-related peptidase b8 (Klk1b8), found in Mus musculus (Mouse).